The primary structure comprises 131 residues: Insertion element IS1 protein InsB (131 aa).

Belongs to the transposase 27 family.

Its function is as follows. Absolutely required for transposition of IS1. The chain is Insertion element IS1 protein InsB (insB) from Shigella sonnei.